A 166-amino-acid polypeptide reads, in one-letter code: Transcription factor HES-5 (166 aa).

Residues 16-72 enclose the bHLH domain; it reads KNRLRKPVVEKMRRDRINSSIEQLKLLLEQEFARHQPNSKLEKADILEMAVSYLKHS. One can recognise an Orange domain in the interval 88–119; that stretch reads YSEGYSWCLQEAVQFLTLHAASDTQMKLLYHF. A disordered region spans residues 125–144; sequence APAAPAKEPKAPGAAPPPAL. Positions 163 to 166 match the WRPW motif motif; that stretch reads WRPW.

In terms of assembly, transcription repression requires formation of a complex with a corepressor protein of the Groucho/TLE family. In terms of tissue distribution, expressed in fetal heart and brain tumors.

The protein resides in the nucleus. Its function is as follows. Transcriptional repressor of genes that require a bHLH protein for their transcription. Plays an important role as neurogenesis negative regulator. The chain is Transcription factor HES-5 (HES5) from Homo sapiens (Human).